The primary structure comprises 205 residues: Phosphoserine phosphatase ThrH (205 aa).

Asp7 functions as the Nucleophile in the catalytic mechanism. Residues Asp7 and Glu9 each contribute to the Mg(2+) site. The active-site Proton donor is Glu9. Substrate-binding positions include Glu15, Arg46, 90 to 91 (SD), and Lys133. Asp152 contributes to the Mg(2+) binding site. Asn155 serves as a coordination point for substrate.

It belongs to the thrH family. Mg(2+) is required as a cofactor.

It catalyses the reaction O-phospho-L-serine + H2O = L-serine + phosphate. It carries out the reaction O-phospho-D-serine + H2O = D-serine + phosphate. It participates in amino-acid biosynthesis; L-serine biosynthesis; L-serine from 3-phospho-D-glycerate: step 3/3. In terms of biological role, phosphoserine phosphatase that mediates dephosphorylation of phosphoserine in the serine biosynthesis pathway. Also able to dephosphorylate other substrates such as phospho-L(or D)-threonine, with lower activity. Shows phosphoserine:homoserine phosphotransferase activity by transferring the phosphoryl group to homoserine using phosphoserine as the phosphoryl group donor. This is Phosphoserine phosphatase ThrH (thrH) from Pseudomonas aeruginosa (strain ATCC 15692 / DSM 22644 / CIP 104116 / JCM 14847 / LMG 12228 / 1C / PRS 101 / PAO1).